The following is a 306-amino-acid chain: D-alanine--D-alanine ligase (306 aa).

The ATP-grasp domain occupies 101 to 303; it reads KQVWQGIGLT…FSQLVVKILE (203 aa). 134–189 is an ATP binding site; it reads VADLGLPLIVKPSLEGSSVGMTKVNEISELRGALEAAFRYDVDLLVEKWLHGPEYT. Positions 257, 270, and 272 each coordinate Mg(2+).

It belongs to the D-alanine--D-alanine ligase family. Mg(2+) is required as a cofactor. Requires Mn(2+) as cofactor.

The protein resides in the cytoplasm. It carries out the reaction 2 D-alanine + ATP = D-alanyl-D-alanine + ADP + phosphate + H(+). It participates in cell wall biogenesis; peptidoglycan biosynthesis. Its function is as follows. Cell wall formation. This is D-alanine--D-alanine ligase from Photorhabdus laumondii subsp. laumondii (strain DSM 15139 / CIP 105565 / TT01) (Photorhabdus luminescens subsp. laumondii).